Consider the following 223-residue polypeptide: Peptidyl-prolyl cis-trans isomerase FKBP16-3, chloroplastic (223 aa).

The transit peptide at M1–I36 directs the protein to the chloroplast. The transit peptide at A37–A76 directs the protein to the thylakoid. A PPIase FKBP-type domain is found at G124 to P216.

Belongs to the FKBP-type PPIase family.

It is found in the plastid. Its subcellular location is the chloroplast thylakoid lumen. It catalyses the reaction [protein]-peptidylproline (omega=180) = [protein]-peptidylproline (omega=0). Its function is as follows. PPIases accelerate the folding of proteins. It catalyzes the cis-trans isomerization of proline imidic peptide bonds in oligopeptides. This Arabidopsis thaliana (Mouse-ear cress) protein is Peptidyl-prolyl cis-trans isomerase FKBP16-3, chloroplastic (FKBP16-3).